We begin with the raw amino-acid sequence, 156 residues long: Cell division protein SepF (156 aa).

The span at Ser-23–Asp-36 shows a compositional bias: basic and acidic residues. Residues Ser-23 to Ala-48 form a disordered region. Polar residues predominate over residues Pro-37 to Ala-48.

This sequence belongs to the SepF family. As to quaternary structure, homodimer. Interacts with FtsZ.

The protein localises to the cytoplasm. Functionally, cell division protein that is part of the divisome complex and is recruited early to the Z-ring. Probably stimulates Z-ring formation, perhaps through the cross-linking of FtsZ protofilaments. Its function overlaps with FtsA. In Bacillus cereus (strain ATCC 10987 / NRS 248), this protein is Cell division protein SepF.